Reading from the N-terminus, the 457-residue chain is MGEAARHPDGDFSDVGNLHAQDVHQALEQHMLVDGYDLVLDLDASSGVWLVDAVTQKRYLDLFSFFASAPLGINPPSIVEDPAFMRELAVAAVNKPSNPDLYSVPYARFVKTFARVLGDPRLPRLFFVDGGALAVENALKAALDWKAQKLGLAEPDTDRLQVLHLERSFHGRSGYTMSLTNTEPSKTARFPKFGWPRISSPALQHPPAEHTGANQEAERRALEAAREAFAAADGMIACFIAEPIQGEGGDNHLSAEFLQAMQRLCHENDALFVLDEVQSGCGITGTAWAYQQLGLQPDLVAFGKKTQVCGVMGGGRIDEVPENVFAVSSRISSTWGGNLADMVRATRLLETIERTQVFDTVVQRGKYFRDGLEDLAARHPSVVTNARGRGLMCAVDLPDTRTRNEVLRLMYTEHQVIALPCGGRSLRFRPALTIAEHEIDQALQALASSVTAVAESV.

Positions 131 and 132 each coordinate pyridoxal 5'-phosphate. Residues Arg-172 and Gln-278 each contribute to the 2-oxoglutarate site. Residue Arg-172 participates in L-lysine binding. A pyridoxal 5'-phosphate-binding site is contributed by Gln-278. Lys-304 is modified (N6-(pyridoxal phosphate)lysine). Arg-427 contributes to the 2-oxoglutarate binding site.

Belongs to the class-III pyridoxal-phosphate-dependent aminotransferase family. Monomer. It depends on pyridoxal 5'-phosphate as a cofactor.

The enzyme catalyses L-lysine + 2-oxoglutarate = (S)-2-amino-6-oxohexanoate + L-glutamate. The protein operates within antibiotic biosynthesis; cephamycin C biosynthesis. Its activity is regulated as follows. Activity is induced in the presence of high concentrations of lysine, but not by L-alpha-aminoadipic acid. Not repressed by ammonium ions. Its function is as follows. Catalyzes the transfer of the terminal amino group of L-lysine to alpha-ketoglutarate to yield L-glutamate and 2-aminoadipate 6-semialdehyde ((S)-2-amino-6-oxohexanoate), which is spontaneously converted to the dehydrated form 1-piperideine 6-carboxylate. Shows a high specificity for L-lysine as substrate although L-ornithine can also be used, leading to the formation of an o-aminobenzaldehyde reactive compound. Only cis-oxaloacetate and pyruvate can replace alpha-ketoglutarate, but with very low efficiency. This chain is L-lysine-epsilon aminotransferase, found in Streptomyces clavuligerus.